The sequence spans 393 residues: Formate-dependent phosphoribosylglycinamide formyltransferase (393 aa).

N(1)-(5-phospho-beta-D-ribosyl)glycinamide-binding positions include 22-23 (EL) and Glu82. Residues Arg114, Lys155, 160-165 (SSGHGQ), 195-198 (EGFV), and Glu203 each bind ATP. An ATP-grasp domain is found at 119–308 (RLAAEELGLP…EFALHARAIL (190 aa)). Positions 267 and 279 each coordinate Mg(2+). Residues Asp286, Lys356, and 363-364 (RR) contribute to the N(1)-(5-phospho-beta-D-ribosyl)glycinamide site.

It belongs to the PurK/PurT family. As to quaternary structure, homodimer.

It catalyses the reaction N(1)-(5-phospho-beta-D-ribosyl)glycinamide + formate + ATP = N(2)-formyl-N(1)-(5-phospho-beta-D-ribosyl)glycinamide + ADP + phosphate + H(+). It functions in the pathway purine metabolism; IMP biosynthesis via de novo pathway; N(2)-formyl-N(1)-(5-phospho-D-ribosyl)glycinamide from N(1)-(5-phospho-D-ribosyl)glycinamide (formate route): step 1/1. Involved in the de novo purine biosynthesis. Catalyzes the transfer of formate to 5-phospho-ribosyl-glycinamide (GAR), producing 5-phospho-ribosyl-N-formylglycinamide (FGAR). Formate is provided by PurU via hydrolysis of 10-formyl-tetrahydrofolate. In Pasteurella multocida (strain Pm70), this protein is Formate-dependent phosphoribosylglycinamide formyltransferase.